The sequence spans 324 residues: Serine carboxypeptidase II-1 (324 aa).

N-linked (GlcNAc...) asparagine glycosylation is present at Asn10. The active site involves Ser41. Intrachain disulfides connect Cys109-Cys121 and Cys145-Cys170. Residues Leu150 to Trp162 constitute a propeptide, linker peptide. A glycan (N-linked (GlcNAc...) asparagine) is linked at Asn191. Active-site residues include Asp239 and His291.

The protein belongs to the peptidase S10 family. As to quaternary structure, carboxypeptidase II is a dimer, where each monomer is composed of two chains linked by a disulfide bond. The linker peptide is endoproteolytically excised during enzyme maturation.

It carries out the reaction Preferential release of a C-terminal arginine or lysine residue.. The sequence is that of Serine carboxypeptidase II-1 (CXP;2-1) from Hordeum vulgare (Barley).